The sequence spans 188 residues: MKANDIKKGNVVEYNGGIYQIRDIERSSPQGRGGNVRFRFIMYSVPGGAKLDASFDADDNLPEVELLRRQSTYSYKDGEAFVFMDDEDYTPYMLDAEVIGTDAGYITDGLTGIFVQVIDDQPVAVQLPQTVTLEVVETPPELKGGTATKRPKPAKLNTGLEIMVPEYITNGERVLVNTTTGEFAGRAD.

Belongs to the elongation factor P family.

The chain is Elongation factor P-like protein from Xanthomonas campestris pv. campestris (strain 8004).